The chain runs to 160 residues: Ribosomal RNA large subunit methyltransferase H (160 aa).

S-adenosyl-L-methionine contacts are provided by residues Leu-76, Gly-108, and 127-132; that span reads FGFMTW.

This sequence belongs to the RNA methyltransferase RlmH family. As to quaternary structure, homodimer.

It localises to the cytoplasm. It catalyses the reaction pseudouridine(1915) in 23S rRNA + S-adenosyl-L-methionine = N(3)-methylpseudouridine(1915) in 23S rRNA + S-adenosyl-L-homocysteine + H(+). Specifically methylates the pseudouridine at position 1915 (m3Psi1915) in 23S rRNA. The polypeptide is Ribosomal RNA large subunit methyltransferase H (Bartonella tribocorum (strain CIP 105476 / IBS 506)).